Consider the following 352-residue polypeptide: Cuticle collagen dpy-17 (352 aa).

The signal sequence occupies residues Met-1–Gln-29. The tract at residues Arg-61 to Arg-64 is furin-like endopeptidase recognition region. Disordered regions lie at residues Gly-73–Asp-143 and Gly-156–Asn-352. The segment covering Gly-87 to Gln-97 has biased composition (gly residues). Triple-helical region regions lie at residues Gly-156–Asp-182, Gly-202–His-264, Gly-267–Arg-290, and Gly-294–Asp-329. Residues Gly-202–Gly-259 form the Collagen-like domain. Over residues Pro-207–Gly-259 the composition is skewed to low complexity. Positions Gln-337 to Asn-352 are enriched in polar residues.

It belongs to the cuticular collagen family. In terms of assembly, collagen polypeptide chains are complexed within the cuticle by disulfide bonds and other types of covalent cross-links.

It is found in the secreted. Its subcellular location is the extracellular space. In terms of biological role, secreted collagen that forms part of the nematode cuticle, which functions as an exoskeleton and a barrier to protect the worm from its environment. Secretion and subsequent incorporation into the cuticle is likely mediated by bli-4, which probably cleaves at the N-terminal consensus furin cleavage site. The chain is Cuticle collagen dpy-17 from Caenorhabditis elegans.